We begin with the raw amino-acid sequence, 209 residues long: Large ribosomal subunit protein uL3 (209 aa).

Position 150 is an N5-methylglutamine (Gln-150).

Belongs to the universal ribosomal protein uL3 family. As to quaternary structure, part of the 50S ribosomal subunit. Forms a cluster with proteins L14 and L19. In terms of processing, methylated by PrmB.

Its function is as follows. One of the primary rRNA binding proteins, it binds directly near the 3'-end of the 23S rRNA, where it nucleates assembly of the 50S subunit. This chain is Large ribosomal subunit protein uL3, found in Photobacterium profundum (strain SS9).